The primary structure comprises 430 residues: Enolase (430 aa).

Position 163 (Gln163) interacts with (2R)-2-phosphoglycerate. Glu205 (proton donor) is an active-site residue. Residues Asp242, Glu285, and Asp312 each coordinate Mg(2+). (2R)-2-phosphoglycerate-binding residues include Lys337, Arg366, Ser367, and Lys388. The active-site Proton acceptor is Lys337.

The protein belongs to the enolase family. Mg(2+) serves as cofactor.

It localises to the cytoplasm. It is found in the secreted. The protein localises to the cell surface. It carries out the reaction (2R)-2-phosphoglycerate = phosphoenolpyruvate + H2O. The protein operates within carbohydrate degradation; glycolysis; pyruvate from D-glyceraldehyde 3-phosphate: step 4/5. In terms of biological role, catalyzes the reversible conversion of 2-phosphoglycerate (2-PG) into phosphoenolpyruvate (PEP). It is essential for the degradation of carbohydrates via glycolysis. In Maridesulfovibrio salexigens (strain ATCC 14822 / DSM 2638 / NCIMB 8403 / VKM B-1763) (Desulfovibrio salexigens), this protein is Enolase.